Reading from the N-terminus, the 20-residue chain is Succinate--CoA ligase [ADP-forming] subunit beta, mitochondrial (20 aa).

Residues 8–20 (SMELLQEAGVSIP) form the ATP-grasp domain.

Belongs to the succinate/malate CoA ligase beta subunit family. ATP-specific subunit beta subfamily. As to quaternary structure, heterodimer of an alpha and a beta subunit. The beta subunit determines specificity for ATP. Interacts with ALAS2.

Its subcellular location is the mitochondrion. The catalysed reaction is succinate + ATP + CoA = succinyl-CoA + ADP + phosphate. Its pathway is carbohydrate metabolism; tricarboxylic acid cycle; succinate from succinyl-CoA (ligase route): step 1/1. Functionally, ATP-specific succinyl-CoA synthetase functions in the citric acid cycle (TCA), coupling the hydrolysis of succinyl-CoA to the synthesis of ATP and thus represents the only step of substrate-level phosphorylation in the TCA. The beta subunit provides nucleotide specificity of the enzyme and binds the substrate succinate, while the binding sites for coenzyme A and phosphate are found in the alpha subunit. The protein is Succinate--CoA ligase [ADP-forming] subunit beta, mitochondrial of Canis lupus familiaris (Dog).